Consider the following 858-residue polypeptide: Bifunctional uridylyltransferase/uridylyl-removing enzyme (858 aa).

The uridylyltransferase stretch occupies residues 1 to 318 (MNPTDLHPIK…FPRPESDARA (318 aa)). The segment at 319 to 674 (IDEEFRSLHG…VRPTEEGSGL (356 aa)) is uridylyl-removing. Residues 437 to 559 (VDQHTLAVIR…VKDERHLNAL (123 aa)) enclose the HD domain. ACT domains follow at residues 675 to 756 (QIMV…LADV) and 789 to 858 (RLSV…LAGE).

Belongs to the GlnD family. The cofactor is Mg(2+).

The enzyme catalyses [protein-PII]-L-tyrosine + UTP = [protein-PII]-uridylyl-L-tyrosine + diphosphate. It carries out the reaction [protein-PII]-uridylyl-L-tyrosine + H2O = [protein-PII]-L-tyrosine + UMP + H(+). Its activity is regulated as follows. Uridylyltransferase (UTase) activity is inhibited by glutamine, while glutamine activates uridylyl-removing (UR) activity. Modifies, by uridylylation and deuridylylation, the PII regulatory proteins (GlnB and homologs), in response to the nitrogen status of the cell that GlnD senses through the glutamine level. Under low glutamine levels, catalyzes the conversion of the PII proteins and UTP to PII-UMP and PPi, while under higher glutamine levels, GlnD hydrolyzes PII-UMP to PII and UMP (deuridylylation). Thus, controls uridylylation state and activity of the PII proteins, and plays an important role in the regulation of nitrogen assimilation and metabolism. The sequence is that of Bifunctional uridylyltransferase/uridylyl-removing enzyme from Bordetella avium (strain 197N).